A 210-amino-acid polypeptide reads, in one-letter code: Small ribosomal subunit protein bS6 (210 aa).

A disordered region spans residues 99–210 (PLPTKRNTKS…KDTKEVKEEG (112 aa)). Positions 120–210 (NDTKEVKEAK…KDTKEVKEEG (91 aa)) are enriched in basic and acidic residues.

The protein belongs to the bacterial ribosomal protein bS6 family.

Functionally, binds together with bS18 to 16S ribosomal RNA. This Prochlorococcus marinus (strain SARG / CCMP1375 / SS120) protein is Small ribosomal subunit protein bS6.